The following is a 638-amino-acid chain: Plasma kallikrein (638 aa).

The signal sequence occupies residues M1 to C19. Apple domains lie at C21–C104, C111–C194, C201–C284, and C292–C375. 18 disulfide bridges follow: C21–C104, C47–C77, C51–C57, C111–C194, C137–C166, C141–C147, C201–C284, C227–C256, C231–C237, C292–C375, C318–C347, C322–C328, C340–C345, C383–C503, C419–C435, C517–C584, C548–C563, and C574–C602. An N-linked (GlcNAc...) asparagine glycan is attached at N127. N-linked (GlcNAc...) asparagine glycosylation is present at N308. One can recognise a Peptidase S1 domain in the interval I391–Q626. N396 carries an N-linked (GlcNAc...) asparagine glycan. H434 (charge relay system) is an active-site residue. An N-linked (GlcNAc...) asparagine glycan is attached at N453. D483 functions as the Charge relay system in the catalytic mechanism. The N-linked (GlcNAc...) asparagine glycan is linked to N494. S578 serves as the catalytic Charge relay system.

It belongs to the peptidase S1 family. Plasma kallikrein subfamily. In terms of assembly, forms a heterodimer with SERPINA5. The zymogen is activated by factor XIIa, which cleaves the molecule into a light chain, which contains the active site, and a heavy chain, which associates with HMW kininogen. These chains are linked by one or more disulfide bonds. Interacts with iripin-3, a serine protease inhibitor from Ixodes ricinus saliva. Interacts with iripin-1, a serine protease inhibitor from Ixodes ricinus saliva. In terms of tissue distribution, found in plasma (at protein level).

It is found in the secreted. It carries out the reaction Cleaves selectively Arg-|-Xaa and Lys-|-Xaa bonds, including Lys-|-Arg and Arg-|-Ser bonds in (human) kininogen to release bradykinin.. Inhibited by SERPINA5. Its function is as follows. Participates in the surface-dependent activation of blood coagulation. Activates, in a reciprocal reaction, coagulation factor XII/F12 after binding to negatively charged surfaces. Releases bradykinin from HMW kininogen and may also play a role in the renin-angiotensin system by converting prorenin into renin. This is Plasma kallikrein (KLKB1) from Homo sapiens (Human).